Here is a 567-residue protein sequence, read N- to C-terminus: Urease subunit alpha (567 aa).

Residues 129–567 form the Urease domain; that stretch reads GGVDSHIHFI…LPLAQRYFLF (439 aa). His134, His136, and Lys217 together coordinate Ni(2+). N6-carboxylysine is present on Lys217. His219 provides a ligand contact to substrate. Ni(2+) is bound by residues His246 and His272. The active-site Proton donor is the His320. Asp360 serves as a coordination point for Ni(2+).

The protein belongs to the metallo-dependent hydrolases superfamily. Urease alpha subunit family. In terms of assembly, heterotrimer of UreA (gamma), UreB (beta) and UreC (alpha) subunits. Three heterotrimers associate to form the active enzyme. The cofactor is Ni cation. Carboxylation allows a single lysine to coordinate two nickel ions.

It is found in the cytoplasm. The catalysed reaction is urea + 2 H2O + H(+) = hydrogencarbonate + 2 NH4(+). The protein operates within nitrogen metabolism; urea degradation; CO(2) and NH(3) from urea (urease route): step 1/1. This is Urease subunit alpha from Pseudomonas putida (strain ATCC 47054 / DSM 6125 / CFBP 8728 / NCIMB 11950 / KT2440).